A 203-amino-acid chain; its full sequence is Holliday junction branch migration complex subunit RuvA (203 aa).

The domain I stretch occupies residues 1 to 64 (MIGRLRGIIL…EDAQLLYGFN (64 aa)). Residues 65 to 142 (NKQERTLFKE…KGLHGDLFTP (78 aa)) form a domain II region. Positions 143 to 154 (AVDLVLTSPASP) are flexible linker. Positions 155 to 203 (GSEDAEQEAVAALVALGYKPQEASRMVSKIARPDASSETLIRDALRAAL) are domain III.

Belongs to the RuvA family. In terms of assembly, homotetramer. Forms an RuvA(8)-RuvB(12)-Holliday junction (HJ) complex. HJ DNA is sandwiched between 2 RuvA tetramers; dsDNA enters through RuvA and exits via RuvB. An RuvB hexamer assembles on each DNA strand where it exits the tetramer. Each RuvB hexamer is contacted by two RuvA subunits (via domain III) on 2 adjacent RuvB subunits; this complex drives branch migration. In the full resolvosome a probable DNA-RuvA(4)-RuvB(12)-RuvC(2) complex forms which resolves the HJ.

It is found in the cytoplasm. Functionally, the RuvA-RuvB-RuvC complex processes Holliday junction (HJ) DNA during genetic recombination and DNA repair, while the RuvA-RuvB complex plays an important role in the rescue of blocked DNA replication forks via replication fork reversal (RFR). RuvA specifically binds to HJ cruciform DNA, conferring on it an open structure. The RuvB hexamer acts as an ATP-dependent pump, pulling dsDNA into and through the RuvAB complex. HJ branch migration allows RuvC to scan DNA until it finds its consensus sequence, where it cleaves and resolves the cruciform DNA. This Salmonella schwarzengrund (strain CVM19633) protein is Holliday junction branch migration complex subunit RuvA.